A 316-amino-acid polypeptide reads, in one-letter code: Aspartate carbamoyltransferase catalytic subunit (316 aa).

Arg56 and Thr57 together coordinate carbamoyl phosphate. Lys84 is an L-aspartate binding site. Carbamoyl phosphate-binding residues include Arg106, His139, and Gln142. L-aspartate is bound by residues Arg172 and Arg226. Carbamoyl phosphate contacts are provided by Gly267 and Pro268.

This sequence belongs to the aspartate/ornithine carbamoyltransferase superfamily. ATCase family. Heterododecamer (2C3:3R2) of six catalytic PyrB chains organized as two trimers (C3), and six regulatory PyrI chains organized as three dimers (R2).

It carries out the reaction carbamoyl phosphate + L-aspartate = N-carbamoyl-L-aspartate + phosphate + H(+). It functions in the pathway pyrimidine metabolism; UMP biosynthesis via de novo pathway; (S)-dihydroorotate from bicarbonate: step 2/3. Its function is as follows. Catalyzes the condensation of carbamoyl phosphate and aspartate to form carbamoyl aspartate and inorganic phosphate, the committed step in the de novo pyrimidine nucleotide biosynthesis pathway. The protein is Aspartate carbamoyltransferase catalytic subunit of Mycobacterium sp. (strain MCS).